Here is a 345-residue protein sequence, read N- to C-terminus: NADH-ubiquinone oxidoreductase chain 2 (345 aa).

10 helical membrane passes run 1 to 21, 25 to 45, 56 to 76, 92 to 114, 149 to 171, 178 to 198, 200 to 220, 241 to 261, 274 to 294, and 324 to 344; these read MNPITLAIIYFTIFLGPVITM, NLMLMWVGLEFSLLAIIPMLI, ATKYFVTQATASMIILLAIVL, GLILNMTLMALSMKLGLAPFHFW, LNSTIILMLAITSIFMGAWGGLN, IMAYSSIAHMGWMLAILPYNP, LTLLNLMIYIILTAPMFMALM, LTMISLMLLSLGGLPPLTGFL, NCLIMATLMAMMALLNLFFYT, and LMFSTLAIMSTMTLPLAPQLI.

It belongs to the complex I subunit 2 family. Core subunit of respiratory chain NADH dehydrogenase (Complex I) which is composed of 45 different subunits. Interacts with TMEM242.

It localises to the mitochondrion inner membrane. It carries out the reaction a ubiquinone + NADH + 5 H(+)(in) = a ubiquinol + NAD(+) + 4 H(+)(out). Its function is as follows. Core subunit of the mitochondrial membrane respiratory chain NADH dehydrogenase (Complex I) which catalyzes electron transfer from NADH through the respiratory chain, using ubiquinone as an electron acceptor. Essential for the catalytic activity and assembly of complex I. The sequence is that of NADH-ubiquinone oxidoreductase chain 2 from Mus musculus (Mouse).